Consider the following 388-residue polypeptide: MKHLHRFFSSDASGGIILIIAAILAMMMANSGATSGWYHDFLETPVQLRVGSLEINKNMLLWINDALMAVFFLLVGLEVKRELMQGSLASLRQAAFPVIAAIGGMIVPALLYLAFNYADPITREGWAIPAATDIAFALGVLALLGSRVPLALKIFLMALAIIDDLGAIIIIALFYTNDLSMASLGVAAVAIAVLAVLNLCGVRRTGVYILVGVVLWTAVLKSGVHATLAGVIVGFFIPLKEKHGRSTAKRLEHVLHPWVAYLILPLFAFANAGVSLQGVTLDGLTSILPLGIIAGLLIGKPLGISLFCWLALRLKLAHLPEGTTYQQIMAVGILCGIGFTMSIFIASLAFGSVDPELINWAKLGILVGSISSAVIGYSWLRVRLRPSV.

Residues 1-11 are Cytoplasmic-facing; the sequence is MKHLHRFFSSD. A helical transmembrane segment spans residues 12-31; that stretch reads ASGGIILIIAAILAMMMANS. Topologically, residues 32–58 are periplasmic; the sequence is GATSGWYHDFLETPVQLRVGSLEINKN. The helical transmembrane segment at 59 to 80 threads the bilayer; it reads MLLWINDALMAVFFLLVGLEVK. Residues 81–96 lie on the Cytoplasmic side of the membrane; the sequence is RELMQGSLASLRQAAF. The chain crosses the membrane as a helical span at residues 97-116; sequence PVIAAIGGMIVPALLYLAFN. Residues 117 to 122 are Periplasmic-facing; it reads YADPIT. Residues 123-130 form a helical membrane-spanning segment; it reads REGWAIPA. The Cytoplasmic portion of the chain corresponds to 131–154; it reads ATDIAFALGVLALLGSRVPLALKI. Residues 155 to 176 traverse the membrane as a helical segment; sequence FLMALAIIDDLGAIIIIALFYT. Topologically, residues 177-180 are periplasmic; it reads NDLS. The chain crosses the membrane as a helical span at residues 181 to 200; sequence MASLGVAAVAIAVLAVLNLC. The Cytoplasmic segment spans residues 201–204; sequence GVRR. The helical transmembrane segment at 205–222 threads the bilayer; the sequence is TGVYILVGVVLWTAVLKS. Residue Gly-223 is a topological domain, periplasmic. Residues 224–236 traverse the membrane as a helical segment; that stretch reads VHATLAGVIVGFF. Residues 237–253 lie on the Cytoplasmic side of the membrane; it reads IPLKEKHGRSTAKRLEH. Residues 254–272 traverse the membrane as a helical segment; sequence VLHPWVAYLILPLFAFANA. The Periplasmic portion of the chain corresponds to 273 to 286; it reads GVSLQGVTLDGLTS. The chain crosses the membrane as a helical span at residues 287–310; it reads ILPLGIIAGLLIGKPLGISLFCWL. Topologically, residues 311–339 are cytoplasmic; sequence ALRLKLAHLPEGTTYQQIMAVGILCGIGF. Residues 340-350 form a helical membrane-spanning segment; that stretch reads TMSIFIASLAF. Topologically, residues 351–357 are periplasmic; that stretch reads GSVDPEL. Residues 358 to 380 traverse the membrane as a helical segment; sequence INWAKLGILVGSISSAVIGYSWL. The Cytoplasmic segment spans residues 381 to 388; it reads RVRLRPSV.

The protein belongs to the NhaA Na(+)/H(+) (TC 2.A.33) antiporter family.

It is found in the cell inner membrane. The enzyme catalyses Na(+)(in) + 2 H(+)(out) = Na(+)(out) + 2 H(+)(in). Functionally, na(+)/H(+) antiporter that extrudes sodium in exchange for external protons. This is Na(+)/H(+) antiporter NhaA from Shigella dysenteriae serotype 1 (strain Sd197).